Consider the following 142-residue polypeptide: Hemoglobin subunit beta-2 (142 aa).

Positions 2–142 (SLTDEEKHLI…VTEALSCQYH (141 aa)) constitute a Globin domain. Residues His-59 and His-88 each coordinate heme b.

It belongs to the globin family. As to quaternary structure, heterotetramer of two alpha chains and two beta chains. Red blood cells.

Involved in oxygen transport from the lung to the various peripheral tissues. The protein is Hemoglobin subunit beta-2 (HBB2) of Torpedo marmorata (Marbled electric ray).